The primary structure comprises 76 residues: Heat shock factor-binding protein 1 (76 aa).

This sequence belongs to the HSBP1 family. As to quaternary structure, homohexamer. Associates with heptad repeats of HSF1 trimers and probably also HSF1 monomers, and with HSP70. Association with HSF1 trimers and HSP70 coincides with attenuation of heat shock response and the conversion of HSF1 trimer to monomer.

Its subcellular location is the nucleus. In terms of biological role, negative regulator of the heat shock response. Negatively affects HSF1 DNA-binding activity. May have a role in the suppression of the activation of the stress response during the aging process. This Homo sapiens (Human) protein is Heat shock factor-binding protein 1 (HSBP1).